The primary structure comprises 440 residues: uncharacterized protein (440 aa).

Positions 1–29 are cleaved as a signal peptide; the sequence is MLRLQMMEGLIVKRTLLLILLLVISVSYA.

This sequence belongs to the Mj S-layer protein family.

This is an uncharacterized protein from Methanocaldococcus jannaschii (strain ATCC 43067 / DSM 2661 / JAL-1 / JCM 10045 / NBRC 100440) (Methanococcus jannaschii).